The sequence spans 691 residues: Methionine--tRNA ligase (691 aa).

Residues 15-25 carry the 'HIGH' region motif; that stretch reads PYTNGPIHIGH. Residues C147, C150, C160, and C163 each contribute to the Zn(2+) site. A 'KMSKS' region motif is present at residues 336–340; that stretch reads KLSTS. T339 is an ATP binding site. Residues 589–691 enclose the tRNA-binding domain; that stretch reads DFTKMDLRVG…DGVKAGTTIN (103 aa).

This sequence belongs to the class-I aminoacyl-tRNA synthetase family. MetG type 1 subfamily. As to quaternary structure, homodimer. It depends on Zn(2+) as a cofactor.

It is found in the cytoplasm. It catalyses the reaction tRNA(Met) + L-methionine + ATP = L-methionyl-tRNA(Met) + AMP + diphosphate. In terms of biological role, is required not only for elongation of protein synthesis but also for the initiation of all mRNA translation through initiator tRNA(fMet) aminoacylation. The sequence is that of Methionine--tRNA ligase from Christiangramia forsetii (strain DSM 17595 / CGMCC 1.15422 / KT0803) (Gramella forsetii).